Here is a 356-residue protein sequence, read N- to C-terminus: Protein ATP1B4 (356 aa).

Residues 1 to 109 (MRRQLRSRRA…SLARTGQSRS (109 aa)) are Nuclear-facing. The segment at 32-77 (LADEEEEAEEEAQVMMVPGLEEEEEEEEGKEEEEEREEEEGQGQST) is disordered. 2 stretches are compositionally biased toward acidic residues: residues 33-43 (ADEEEEAEEEA) and 51-72 (LEEEEEEEEGKEEEEEREEEEG). A helical; Signal-anchor for type II membrane protein transmembrane segment spans residues 110 to 130 (LILVIYFFFYASLAAVITLFI). The Perinuclear space portion of the chain corresponds to 131 to 356 (YMLFLAISPY…RIIFTLNIET (226 aa)).

The protein belongs to the X(+)/potassium ATPases subunit beta family. Does not associate with known Na,K-ATPase alpha-subunits. Associates with a SMAD7-transcriptional complex. Interacts with SNW1 and TOR1AIP1. Expressed in perinatal myocytes (at protein level). Expressed during postnatal development in skeletal muscle and heart.

The protein localises to the nucleus inner membrane. Functionally, may act as a transcriptional coregulator during muscle development through its interaction with SNW1. Has lost its ancestral function as a Na,K-ATPase beta-subunit. The polypeptide is Protein ATP1B4 (Atp1b4) (Rattus norvegicus (Rat)).